A 258-amino-acid polypeptide reads, in one-letter code: Serine protease sp-Eoc49 (258 aa).

Positions 1–18 (MVLIRVLANLLVLQLSYA) are cleaved as a signal peptide. Residues 25 to 249 (VVGGGECNRN…YTDWIQSIIA (225 aa)) enclose the Peptidase S1 domain. Asn44 is a glycosylation site (N-linked (GlcNAc...) asparagine). The cysteines at positions 50 and 66 are disulfide-linked. The Charge relay system role is filled by His65. 2 N-linked (GlcNAc...) asparagine glycosylation sites follow: Asn79 and Asn103. Asp110 serves as the catalytic Charge relay system. 3 disulfides stabilise this stretch: Cys142–Cys210, Cys174–Cys189, and Cys200–Cys225. Asn154 carries N-linked (GlcNAc...) asparagine glycosylation. Catalysis depends on Ser204, which acts as the Charge relay system. N-linked (GlcNAc...) asparagine glycosylation is present at Asn251.

The protein belongs to the peptidase S1 family. Snake venom subfamily. Monomer. Expressed by the venom gland.

Its subcellular location is the secreted. In terms of biological role, snake venom serine protease that may act in the hemostasis system of the prey. This is Serine protease sp-Eoc49 from Echis ocellatus (Ocellated saw-scaled viper).